Here is a 194-residue protein sequence, read N- to C-terminus: Peptidyl-tRNA hydrolase (194 aa).

Y17 provides a ligand contact to tRNA. The active-site Proton acceptor is H22. TRNA is bound by residues F69, N71, and N117.

The protein belongs to the PTH family. As to quaternary structure, monomer.

It localises to the cytoplasm. The enzyme catalyses an N-acyl-L-alpha-aminoacyl-tRNA + H2O = an N-acyl-L-amino acid + a tRNA + H(+). Functionally, hydrolyzes ribosome-free peptidyl-tRNAs (with 1 or more amino acids incorporated), which drop off the ribosome during protein synthesis, or as a result of ribosome stalling. Catalyzes the release of premature peptidyl moieties from peptidyl-tRNA molecules trapped in stalled 50S ribosomal subunits, and thus maintains levels of free tRNAs and 50S ribosomes. The protein is Peptidyl-tRNA hydrolase of Renibacterium salmoninarum (strain ATCC 33209 / DSM 20767 / JCM 11484 / NBRC 15589 / NCIMB 2235).